Reading from the N-terminus, the 342-residue chain is Phenylalanine--tRNA ligase alpha subunit (342 aa).

Position 257 (glutamate 257) interacts with Mg(2+).

This sequence belongs to the class-II aminoacyl-tRNA synthetase family. Phe-tRNA synthetase alpha subunit type 1 subfamily. As to quaternary structure, tetramer of two alpha and two beta subunits. Mg(2+) serves as cofactor.

It is found in the cytoplasm. It carries out the reaction tRNA(Phe) + L-phenylalanine + ATP = L-phenylalanyl-tRNA(Phe) + AMP + diphosphate + H(+). The chain is Phenylalanine--tRNA ligase alpha subunit from Legionella pneumophila subsp. pneumophila (strain Philadelphia 1 / ATCC 33152 / DSM 7513).